Consider the following 193-residue polypeptide: Peptidyl-tRNA hydrolase (193 aa).

A tRNA-binding site is contributed by tyrosine 16. The Proton acceptor role is filled by histidine 21. Positions 67, 69, and 115 each coordinate tRNA.

Belongs to the PTH family. As to quaternary structure, monomer.

The protein resides in the cytoplasm. The enzyme catalyses an N-acyl-L-alpha-aminoacyl-tRNA + H2O = an N-acyl-L-amino acid + a tRNA + H(+). In terms of biological role, hydrolyzes ribosome-free peptidyl-tRNAs (with 1 or more amino acids incorporated), which drop off the ribosome during protein synthesis, or as a result of ribosome stalling. Catalyzes the release of premature peptidyl moieties from peptidyl-tRNA molecules trapped in stalled 50S ribosomal subunits, and thus maintains levels of free tRNAs and 50S ribosomes. This chain is Peptidyl-tRNA hydrolase, found in Vesicomyosocius okutanii subsp. Calyptogena okutanii (strain HA).